The primary structure comprises 178 residues: Large ribosomal subunit protein bL25 (178 aa).

The protein belongs to the bacterial ribosomal protein bL25 family. CTC subfamily. In terms of assembly, part of the 50S ribosomal subunit; part of the 5S rRNA/L5/L18/L25 subcomplex. Contacts the 5S rRNA. Binds to the 5S rRNA independently of L5 and L18.

In terms of biological role, this is one of the proteins that binds to the 5S RNA in the ribosome where it forms part of the central protuberance. In Helicobacter pylori (strain G27), this protein is Large ribosomal subunit protein bL25.